The primary structure comprises 414 residues: Probable protein phosphatase 2C 80 (414 aa).

One can recognise a PPM-type phosphatase domain in the interval 174–411 (SCYLPHPEKE…DDITAVVSYV (238 aa)). Mn(2+) is bound by residues Asp204, Gly205, Asp336, and Asp402.

Belongs to the PP2C family. Mg(2+) serves as cofactor. Mn(2+) is required as a cofactor.

It catalyses the reaction O-phospho-L-seryl-[protein] + H2O = L-seryl-[protein] + phosphate. The enzyme catalyses O-phospho-L-threonyl-[protein] + H2O = L-threonyl-[protein] + phosphate. This chain is Probable protein phosphatase 2C 80, found in Arabidopsis thaliana (Mouse-ear cress).